The chain runs to 230 residues: C-methyltransferase CouO (230 aa).

It belongs to the methyltransferase superfamily.

It functions in the pathway antibiotic biosynthesis. Functionally, mediates C-methylation at the 8-position of the aminocoumarin moieties in coumermycin A1 in the biosynthetic pathway of coumermycin antibiotic. Active on both mono- and bis-amides for mono- and di-C-methylation adjacent to the phenolic hydroxyl before it is glycosylated by CouM. This chain is C-methyltransferase CouO (couO), found in Streptomyces rishiriensis.